The following is a 226-amino-acid chain: tRNA (guanine-N(1)-)-methyltransferase (226 aa).

S-adenosyl-L-methionine-binding positions include Gly-112 and 132–137 (IGDYVL).

This sequence belongs to the RNA methyltransferase TrmD family. In terms of assembly, homodimer.

It localises to the cytoplasm. It catalyses the reaction guanosine(37) in tRNA + S-adenosyl-L-methionine = N(1)-methylguanosine(37) in tRNA + S-adenosyl-L-homocysteine + H(+). In terms of biological role, specifically methylates guanosine-37 in various tRNAs. This is tRNA (guanine-N(1)-)-methyltransferase from Christiangramia forsetii (strain DSM 17595 / CGMCC 1.15422 / KT0803) (Gramella forsetii).